Here is a 147-residue protein sequence, read N- to C-terminus: MRTTPLAKTSEIERKWYLIDATDVSLGRLSTAVATILRGKNKPQFTPNVDTGDNVIIVNASKLKLTGKKATDKIYYHHSEYRGGLKSVSAGELLAKNPVKLVELSVKGMLPKNTLGHQEFLKMHVYAGEEHKHEAQKPEKLDINNLI.

Belongs to the universal ribosomal protein uL13 family. Part of the 50S ribosomal subunit.

This protein is one of the early assembly proteins of the 50S ribosomal subunit, although it is not seen to bind rRNA by itself. It is important during the early stages of 50S assembly. In Lactobacillus delbrueckii subsp. bulgaricus (strain ATCC 11842 / DSM 20081 / BCRC 10696 / JCM 1002 / NBRC 13953 / NCIMB 11778 / NCTC 12712 / WDCM 00102 / Lb 14), this protein is Large ribosomal subunit protein uL13.